We begin with the raw amino-acid sequence, 1680 residues long: SWI/SNF chromatin-remodeling complex subunit snf22 (1680 aa).

4 disordered regions span residues 61 to 135 (QQMR…SQAS), 203 to 258 (NNSF…HSFS), 274 to 300 (RRGSIPVNPSTFSASSPPSGSMLASPY), and 367 to 427 (YVYR…VPPT). Over residues 62 to 91 (QMRNQSSEFPDAENTNLRKQQDTLPTTGFN) the composition is skewed to polar residues. Composition is skewed to low complexity over residues 118–127 (GNGNVGLNNP) and 222–233 (SSLPHSFASPSS). Residues 234 to 245 (TFEQPHTVQSRA) are compositionally biased toward polar residues. Composition is skewed to low complexity over residues 247–258 (SVDTTSSSHSFS), 282–299 (PSTFSASSPPSGSMLASP), and 374–392 (PPSATSFQPSSSRSPSVDP). Residues 406–419 (PSPSASALKTQSHV) are compositionally biased toward polar residues. One can recognise a QLQ domain in the interval 429 to 465 (KLNHAQLAMLKSQIVAYNCLNSPNGQVPPAVQQAIFG). The span at 477–489 (SMPFQQNVPQMSS) shows a compositional bias: polar residues. Positions 477–499 (SMPFQQNVPQMSSVKKDTPTRDA) are disordered. The span at 490 to 499 (VKKDTPTRDA) shows a compositional bias: basic and acidic residues. One can recognise an HSA domain in the interval 704–776 (QKTEHAMRQK…ARQRLQALRA (73 aa)). The segment covering 817–832 (SNIHSGNTSGKGSNSA) has biased composition (polar residues). A disordered region spans residues 817–836 (SNIHSGNTSGKGSNSAELEA). The Helicase ATP-binding domain occupies 881–1046 (LSLYNNNLNG…WALLNFVLPK (166 aa)). 894 to 901 (DEMGLGKT) serves as a coordination point for ATP. The short motif at 996 to 999 (DEGH) is the DEGH box element. In terms of domain architecture, Helicase C-terminal spans 1191–1354 (LLDRILPKLF…STPEEREAFL (164 aa)). Positions 1466-1511 (TVDDPSSTLMPRKRGRPRKKTNSGSSLSTPLSQESSLARSGRKNTP) are disordered. Residues 1476-1486 (PRKRGRPRKKT) show a composition bias toward basic residues. Residues 1488–1502 (SGSSLSTPLSQESSL) show a composition bias toward low complexity. Residues 1513–1623 (YKQKALRRYC…KTLKEVIEDL (111 aa)) enclose the Bromo domain.

Belongs to the SNF2/RAD54 helicase family. In terms of assembly, component of the SWI/SNF global transcription activator complex composed of at least arp9, arp42, snf5, snf22, snf30, sbf59, sol1, ssr1, ssr2, ssr3, ssr4 and tfg3.

Its subcellular location is the nucleus. Its function is as follows. Helicase. Component of the SWI/SNF complex, an ATP-dependent chromatin remodeling complex, required for the positive and negative regulation of gene expression of a large number of genes. It changes chromatin structure by altering DNA-histone contacts within a nucleosome, leading eventually to a change in nucleosome position, thus facilitating or repressing binding of gene-specific transcription factors. This Schizosaccharomyces pombe (strain 972 / ATCC 24843) (Fission yeast) protein is SWI/SNF chromatin-remodeling complex subunit snf22 (snf22).